The following is an 867-amino-acid chain: Coiled-coil domain-containing protein 80 (867 aa).

The first 18 residues, 1 to 18 (MRARYMLGFGVLCLLTWA), serve as a signal peptide directing secretion. Disordered stretches follow at residues 83–121 (RKVL…SSAG) and 282–539 (DSQV…GTLA). Residues 95–104 (GTRNPIQQDD) show a composition bias toward polar residues. Over residues 288 to 297 (PTERRKEIRK) the composition is skewed to basic and acidic residues. Low complexity predominate over residues 301-370 (RPTTTTTPAP…PRTTRANTTP (70 aa)). A compositionally biased stretch (basic and acidic residues) spans 401–412 (ARYRDNHTSKKE). Residues 426–435 (KPTKVRPTKK) show a composition bias toward basic residues. The span at 436 to 451 (KNGDKDISNAYEEKYD) shows a compositional bias: basic and acidic residues. Residues 471-483 (KRGKGKTDKKKKK) show a composition bias toward basic residues. Composition is skewed to basic and acidic residues over residues 484-504 (DKTD…DGKG) and 514-523 (KILEKEDYQK).

Belongs to the CCDC80 family. In terms of assembly, binds to various extracellular matrix proteins.

Its subcellular location is the secreted. It localises to the extracellular space. The protein resides in the extracellular matrix. In terms of biological role, promotes cell adhesion and matrix assembly. The sequence is that of Coiled-coil domain-containing protein 80 (ccdc80) from Danio rerio (Zebrafish).